The chain runs to 337 residues: S-adenosylmethionine:tRNA ribosyltransferase-isomerase (337 aa).

It belongs to the QueA family. Monomer.

It is found in the cytoplasm. The catalysed reaction is 7-aminomethyl-7-carbaguanosine(34) in tRNA + S-adenosyl-L-methionine = epoxyqueuosine(34) in tRNA + adenine + L-methionine + 2 H(+). It functions in the pathway tRNA modification; tRNA-queuosine biosynthesis. Functionally, transfers and isomerizes the ribose moiety from AdoMet to the 7-aminomethyl group of 7-deazaguanine (preQ1-tRNA) to give epoxyqueuosine (oQ-tRNA). This chain is S-adenosylmethionine:tRNA ribosyltransferase-isomerase, found in Legionella pneumophila (strain Corby).